Here is a 122-residue protein sequence, read N- to C-terminus: Basic phospholipase A2 LmTX-I (122 aa).

Cystine bridges form between Cys-26/Cys-115, Cys-28/Cys-44, Cys-43/Cys-95, Cys-49/Cys-122, Cys-50/Cys-88, and Cys-75/Cys-86. Tyr-27, Gly-29, and Gly-31 together coordinate Ca(2+). Residue His-47 is part of the active site. Residue Asp-48 coordinates Ca(2+). Asp-89 is an active-site residue.

As to quaternary structure, monomer. Requires Ca(2+) as cofactor. As to expression, expressed by the venom gland.

It is found in the secreted. The catalysed reaction is a 1,2-diacyl-sn-glycero-3-phosphocholine + H2O = a 1-acyl-sn-glycero-3-phosphocholine + a fatty acid + H(+). With respect to regulation, inhibited by Mn(2+), Mg(2+), Zn(2+) and Cu(2+). Its function is as follows. Snake venom phospholipase A2 (PLA2) that displays neurotoxic and myotoxic activities. Induces inflammatory edema by mechanisms involving mast cell activation and arachidonic acid metabolites. Increases plasma creatine kinase activity. PLA2 catalyzes the calcium-dependent hydrolysis of the 2-acyl groups in 3-sn-phosphoglycerides. In Lachesis muta muta (Bushmaster), this protein is Basic phospholipase A2 LmTX-I.